A 432-amino-acid chain; its full sequence is Cyclic GMP-AMP synthase (432 aa).

Residue 110 to 115 (QGSFQY) participates in GTP binding. Mg(2+) is bound by residues Asp-129 and Asp-131. Arg-180 contacts ATP. Asp-191 contributes to the Mg(2+) binding site. Residue Ser-255 coordinates ATP. Residues Lys-283, Ser-297, and Asp-344 each coordinate GTP. The segment at 413–432 (LNAPSKEPSSKPINKTMVSG) is disordered. Polar residues predominate over residues 423-432 (KPINKTMVSG).

Belongs to the CD-NTase family. A01 subfamily. The cofactor is Mg(2+).

The catalysed reaction is GTP + ATP = 3',3'-cGAMP + 2 diphosphate. Cyclic nucleotide synthase (second messenger synthase) of a CBASS antivirus system. CBASS (cyclic oligonucleotide-based antiphage signaling system) provides immunity against bacteriophage. The CD-NTase protein synthesizes cyclic nucleotides in response to infection; these serve as specific second messenger signals. The signals activate a diverse range of effectors, leading to bacterial cell death and thus abortive phage infection. A type II-C(GA) CBASS system. In terms of biological role, catalyzes the synthesis of 3'3'-cyclic GMP-AMP (3'3'-cGAMP) from GTP and ATP, a second messenger in cell signal transduction. Is also able to produce c-di-AMP and c-di-GMP from ATP and GTP, respectively; however, 3'3'-cGAMP is the dominant molecule produced by DncV in vivo, contrary to the 2'3'-cGAMP produced by eukaryotes. By producing cGAMP, down-regulates csgD expression and expression of flagellum regulon genes, which leads to the down-regulation of rdar biofilm formation and flagellum-mediated swimming and swarming motility in a temperature-dependent manner. Controls the activity of cGAMP-activated phospholipase CapV, a patatin-like lipase that is a direct 3',3'-cGAMP receptor encoded in the dncV operon. This Escherichia coli protein is Cyclic GMP-AMP synthase.